The chain runs to 254 residues: 4-hydroxy-tetrahydrodipicolinate reductase (254 aa).

7–12 (GASGRI) provides a ligand contact to NAD(+). Arg35 serves as a coordination point for NADP(+). Residues 91 to 93 (GTT) and 115 to 118 (AHNM) each bind NAD(+). His147 serves as the catalytic Proton donor/acceptor. His148 contributes to the (S)-2,3,4,5-tetrahydrodipicolinate binding site. Lys151 serves as the catalytic Proton donor. Residue 157 to 158 (GT) participates in (S)-2,3,4,5-tetrahydrodipicolinate binding.

Belongs to the DapB family.

The protein localises to the cytoplasm. The catalysed reaction is (S)-2,3,4,5-tetrahydrodipicolinate + NAD(+) + H2O = (2S,4S)-4-hydroxy-2,3,4,5-tetrahydrodipicolinate + NADH + H(+). It carries out the reaction (S)-2,3,4,5-tetrahydrodipicolinate + NADP(+) + H2O = (2S,4S)-4-hydroxy-2,3,4,5-tetrahydrodipicolinate + NADPH + H(+). The protein operates within amino-acid biosynthesis; L-lysine biosynthesis via DAP pathway; (S)-tetrahydrodipicolinate from L-aspartate: step 4/4. Functionally, catalyzes the conversion of 4-hydroxy-tetrahydrodipicolinate (HTPA) to tetrahydrodipicolinate. The sequence is that of 4-hydroxy-tetrahydrodipicolinate reductase from Helicobacter pylori (strain Shi470).